A 242-amino-acid polypeptide reads, in one-letter code: Eukaryotic translation initiation factor 4E type 1B (242 aa).

The segment at 1-42 is disordered; that stretch reads MLAVEVSEAEGGIREWEEEEKEEEAAERTPTGEKSPNSPRTL. The span at 16–25 shows a compositional bias: acidic residues; sequence WEEEEKEEEA. Residues 32–41 show a composition bias toward polar residues; the sequence is GEKSPNSPRT. The segment at 62–65 is EIF4EBP1/2/3 binding; sequence HPLQ. 81 to 82 lines the mRNA pocket; sequence WQ. Residues 98-102 are EIF4EBP1/2/3 binding; that stretch reads WALYS. 127–128 is an mRNA binding site; the sequence is WE. Residues 157-164 are EIF4EBP1/2/3 binding; the sequence is ETLLCLIG. Residues 182 to 187 and 230 to 232 each bind mRNA; these read RTKGDK and TKS.

The protein belongs to the eukaryotic initiation factor 4E family. In terms of assembly, eIF4F is a multi-subunit complex, the composition of which varies with external and internal environmental conditions. It is composed of at least EIF4A, EIF4E and EIF4G.

Recognizes and binds the 7-methylguanosine-containing mRNA cap during an early step in the initiation of protein synthesis and facilitates ribosome binding by inducing the unwinding of the mRNAs secondary structure. In Homo sapiens (Human), this protein is Eukaryotic translation initiation factor 4E type 1B (EIF4E1B).